Here is a 107-residue protein sequence, read N- to C-terminus: Ferredoxin CarAc (107 aa).

The region spanning 6-102 (LKVCAASDMQ…VEVKEGEVYV (97 aa)) is the Rieske domain. Positions 46, 48, 65, and 68 each coordinate [2Fe-2S] cluster.

In terms of assembly, monomer. Carbazole 1,9a-dioxygenase complex consists of a terminal oxygenase component CarAa, a ferredoxin reductase component CarAd and a ferredoxin component CarAc. The cofactor is [2Fe-2S] cluster.

In terms of biological role, part of the multicomponent carbazole 1,9a-dioxygenase (CARDO), that converts carbazole (CAR) into 2-aminobiphenyl-2,3-diol. Acts as a mediator in the electron transfer from CarAd to CarAa. The protein is Ferredoxin CarAc (carAc) of Metapseudomonas resinovorans (Pseudomonas resinovorans).